Consider the following 879-residue polypeptide: Alanine--tRNA ligase (879 aa).

4 residues coordinate Zn(2+): His566, His570, Cys668, and His672.

The protein belongs to the class-II aminoacyl-tRNA synthetase family. It depends on Zn(2+) as a cofactor.

It localises to the cytoplasm. It catalyses the reaction tRNA(Ala) + L-alanine + ATP = L-alanyl-tRNA(Ala) + AMP + diphosphate. In terms of biological role, catalyzes the attachment of alanine to tRNA(Ala) in a two-step reaction: alanine is first activated by ATP to form Ala-AMP and then transferred to the acceptor end of tRNA(Ala). Also edits incorrectly charged Ser-tRNA(Ala) and Gly-tRNA(Ala) via its editing domain. In Listeria monocytogenes serovar 1/2a (strain ATCC BAA-679 / EGD-e), this protein is Alanine--tRNA ligase.